An 884-amino-acid chain; its full sequence is Protein P (884 aa).

The interval 1-184 is terminal protein domain (TP); that stretch reads MHPFSRLFRN…GKPYSWEHRQ (184 aa). The tract at residues 185–387 is spacer; sequence LVQHNGQQHK…YCIHHIVSSL (203 aa). Disordered regions lie at residues 218–241 and 299–345; these read PSEPVSVSTRNLSNNISDKSQKST and RNSG…DFSS. Composition is skewed to polar residues over residues 222–241 and 323–332; these read VSVSTRNLSNNISDKSQKST and YSSNSTSQRY. The segment at 388–729 is polymerase/reverse transcriptase domain (RT); that stretch reads DDWGPCTVTG…YEELWPVVRQ (342 aa). The 242-residue stretch at 398–639 folds into the Reverse transcriptase domain; it reads DVTIKSPRTP…NHLHFMGYVI (242 aa). Residues D470, D590, and D591 each coordinate Mg(2+).

The protein belongs to the hepadnaviridae P protein family.

It carries out the reaction DNA(n) + a 2'-deoxyribonucleoside 5'-triphosphate = DNA(n+1) + diphosphate. It catalyses the reaction Endonucleolytic cleavage to 5'-phosphomonoester.. With respect to regulation, activated by host HSP70 and HSP40 in vitro to be able to bind the epsilon loop of the pgRNA. Because deletion of the RNase H region renders the protein partly chaperone-independent, the chaperones may be needed indirectly to relieve occlusion of the RNA-binding site by this domain. Inhibited by several reverse-transcriptase inhibitors: Lamivudine, Adefovir and Entecavir. Its function is as follows. Multifunctional enzyme that converts the viral RNA genome into dsDNA in viral cytoplasmic capsids. This enzyme displays a DNA polymerase activity that can copy either DNA or RNA templates, and a ribonuclease H (RNase H) activity that cleaves the RNA strand of RNA-DNA heteroduplexes in a partially processive 3'- to 5'-endonucleasic mode. Neo-synthesized pregenomic RNA (pgRNA) are encapsidated together with the P protein, and reverse-transcribed inside the nucleocapsid. Initiation of reverse-transcription occurs first by binding the epsilon loop on the pgRNA genome, and is initiated by protein priming, thereby the 5'-end of (-)DNA is covalently linked to P protein. Partial (+)DNA is synthesized from the (-)DNA template and generates the relaxed circular DNA (RC-DNA) genome. After budding and infection, the RC-DNA migrates in the nucleus, and is converted into a plasmid-like covalently closed circular DNA (cccDNA). The activity of P protein does not seem to be necessary for cccDNA generation, and is presumably released from (+)DNA by host nuclear DNA repair machinery. This is Protein P from Marmota monax (Woodchuck).